The chain runs to 316 residues: 4-diphosphocytidyl-2-C-methyl-D-erythritol kinase (316 aa).

Residue Lys-23 is part of the active site. Residue 108-118 (PVAGGMAGGSA) participates in ATP binding. The active site involves Asp-150.

This sequence belongs to the GHMP kinase family. IspE subfamily.

It carries out the reaction 4-CDP-2-C-methyl-D-erythritol + ATP = 4-CDP-2-C-methyl-D-erythritol 2-phosphate + ADP + H(+). It functions in the pathway isoprenoid biosynthesis; isopentenyl diphosphate biosynthesis via DXP pathway; isopentenyl diphosphate from 1-deoxy-D-xylulose 5-phosphate: step 3/6. Catalyzes the phosphorylation of the position 2 hydroxy group of 4-diphosphocytidyl-2C-methyl-D-erythritol. The protein is 4-diphosphocytidyl-2-C-methyl-D-erythritol kinase of Mycolicibacterium paratuberculosis (strain ATCC BAA-968 / K-10) (Mycobacterium paratuberculosis).